The primary structure comprises 110 residues: Cysteine-rich and transmembrane domain-containing protein 1 (110 aa).

Residues 1–18 (MNYENPPPYASPPAPYPP) are compositionally biased toward pro residues. A disordered region spans residues 1 to 45 (MNYENPPPYASPPAPYPPYGQQQPSYPVPNQYPGNPPGPVGYQPA). Residues 19–29 (YGQQQPSYPVP) are compositionally biased toward low complexity. Residues 87-104 (SGESACLTACWTALCCCC) traverse the membrane as a helical segment.

This sequence belongs to the CYSTM1 family.

The protein resides in the membrane. The sequence is that of Cysteine-rich and transmembrane domain-containing protein 1 (cystm1) from Xenopus tropicalis (Western clawed frog).